Here is a 765-residue protein sequence, read N- to C-terminus: Protein transport protein Sec23A (765 aa).

4 residues coordinate Zn(2+): Cys-61, Cys-66, Cys-85, and Cys-88. A Gelsolin-like repeat occupies 632–718; sequence PEPVLLDSSS…EHGGSQARFL (87 aa).

Belongs to the SEC23/SEC24 family. SEC23 subfamily. COPII is composed of at least five proteins: the Sec23/24 complex, the Sec13/31 complex and Sar1.

Its subcellular location is the cytoplasmic vesicle. It is found in the COPII-coated vesicle membrane. The protein localises to the endoplasmic reticulum membrane. It localises to the cytoplasm. The protein resides in the cytosol. Functionally, component of the coat protein complex II (COPII) which promotes the formation of transport vesicles from the endoplasmic reticulum (ER). The coat has two main functions, the physical deformation of the endoplasmic reticulum membrane into vesicles and the selection of cargo molecules for their transport to the Golgi complex. This Xenopus tropicalis (Western clawed frog) protein is Protein transport protein Sec23A.